Consider the following 430-residue polypeptide: Putative glycylpeptide N-tetradecanoyltransferase 2 (430 aa).

Tetradecanoyl-CoA contacts are provided by residues 47 to 50 (HKFW), 181 to 183 (LCV), and 189 to 193 (SKGLA). The active-site Proton acceptor; via carboxylate is leucine 430.

It belongs to the NMT family.

The catalysed reaction is N-terminal glycyl-[protein] + tetradecanoyl-CoA = N-tetradecanoylglycyl-[protein] + CoA + H(+). Its function is as follows. May add a myristoyl group to the N-terminal glycine residue of certain cellular proteins. The chain is Putative glycylpeptide N-tetradecanoyltransferase 2 (NMT2) from Arabidopsis thaliana (Mouse-ear cress).